We begin with the raw amino-acid sequence, 417 residues long: Phosphoglycerate kinase 1 (417 aa).

Ser-2 carries the N-acetylserine modification. A phosphoserine mark is found at Ser-2 and Ser-4. Positions 2–186 (SLSNKLTLDK…VGVNLPQKAG (185 aa)) are globular domain-1. Lys-6 carries the post-translational modification N6-succinyllysine. N6-acetyllysine is present on Lys-11. Val-23, Asp-24, Phe-25, Asn-26, Gln-38, and Arg-39 together coordinate (2R)-3-phosphoglycerate. The mitochondrial targeting region exposed following cis-trans isomerization by PIN1 and recognized by the TOM complex for mitochondrial translocation of the protein stretch occupies residues 38–43 (QRIKAA). Lys-48 is modified (N6-acetyllysine; alternate). An N6-succinyllysine; alternate modification is found at Lys-48. Residues Ser-62, His-63, Gly-65, and Arg-66 each coordinate (2R)-3-phosphoglycerate. Position 75 is an N6-acetyllysine (Lys-75). Tyr-76 carries the phosphotyrosine modification. N6-acetyllysine is present on residues Lys-86 and Lys-91. Position 97 is an N6-acetyllysine; alternate (Lys-97). N6-(2-hydroxyisobutyryl)lysine; alternate is present on Lys-97. Positions 122 and 123 each coordinate (2R)-3-phosphoglycerate. Lys-131 carries the post-translational modification N6-acetyllysine; alternate. Lys-131 carries the post-translational modification N6-malonyllysine; alternate. The residue at position 146 (Lys-146) is an N6-acetyllysine. Residues His-170 and Arg-171 each coordinate (2R)-3-phosphoglycerate. The segment at 187 to 190 (GFLM) is linker. Lys-191 bears the N6-succinyllysine mark. The interval 191-417 (KKELNYFAKA…LPGVDALSNV (227 aa)) is globular domain-2. Tyr-196 is modified (phosphotyrosine). Residue Lys-199 is modified to N6-acetyllysine. The residue at position 203 (Ser-203) is a Phosphoserine. ADP is bound at residue Gly-214. Gly-214 is a binding site for CDP. Residues Ala-215 and Lys-216 each contribute to the AMP site. Residue Ala-215 participates in ATP binding. Ala-215 contributes to the Mg(2+) binding site. Lys-216 bears the N6-(2-hydroxyisobutyryl)lysine mark. Mg(2+) is bound by residues Ala-218 and Asp-219. CDP is bound at residue Asp-219. Lys-220 serves as a coordination point for AMP. Lys-220 provides a ligand contact to ATP. An N6-(2-hydroxyisobutyryl)lysine modification is found at Lys-220. Gly-238 contacts ADP. A CDP-binding site is contributed by Gly-238. Residue Gly-239 coordinates AMP. Position 239 (Gly-239) interacts with ATP. Lys-267 and Lys-291 each carry N6-acetyllysine. Residue Gly-313 participates in AMP binding. An ATP-binding site is contributed by Gly-313. Lys-323 is subject to N6-(2-hydroxyisobutyryl)lysine. Gly-338, Val-340, and Phe-343 together coordinate CDP. Phe-343 serves as a coordination point for ADP. AMP is bound at residue Glu-344. Glu-344 lines the ATP pocket. The residue at position 361 (Lys-361) is an N6-acetyllysine. Residues Asp-375 and Thr-376 each coordinate ATP. Asp-375 lines the Mg(2+) pocket. The segment at 406 to 417 (KVLPGVDALSNV) is associated with globular domain 1.

This sequence belongs to the phosphoglycerate kinase family. Monomer. Interacts with kinase MAPK1/ERK2; the interaction is direct, occurs under hypoxic conditions, and promotes its interaction with PIN1. Interacts with peptidyl-prolyl cis-trans isomerase PIN1; the interaction is direct, occurs under hypoxic conditions, and targets the protein to the mitochondrion by promoting interactions with the TOM complex. Interacts with mitochondrial circRNA mcPGK1 (via its 2nd stem-loop); the interaction is direct and targets the protein to the mitochondrion by promoting interactions with the TOM complex. Interacts with pyruvate dehydrogenase kinase PDK1; the interaction is direct, occurs under hypoxic conditions and leads to PDK1-mediated inhibition of pyruvate dehydrogenase complex activity. Mg(2+) serves as cofactor. Phosphorylated at Ser-203 by MAPK1/ERK2 under hypoxic conditions, which promotes its mitochondrial targeting.

Its subcellular location is the cytoplasm. The protein localises to the cytosol. It is found in the mitochondrion matrix. It catalyses the reaction (2R)-3-phosphoglycerate + ATP = (2R)-3-phospho-glyceroyl phosphate + ADP. The enzyme catalyses L-seryl-[protein] + ATP = O-phospho-L-seryl-[protein] + ADP + H(+). It participates in carbohydrate degradation; glycolysis; pyruvate from D-glyceraldehyde 3-phosphate: step 2/5. Functionally, catalyzes one of the two ATP producing reactions in the glycolytic pathway via the reversible conversion of 1,3-diphosphoglycerate to 3-phosphoglycerate. Both L- and D- forms of purine and pyrimidine nucleotides can be used as substrates, but the activity is much lower on pyrimidines. In addition to its role as a glycolytic enzyme, it seems that PGK-1 acts as a polymerase alpha cofactor protein (primer recognition protein). Acts as a protein kinase when localized to the mitochondrion where it phosphorylates pyruvate dehydrogenase kinase PDK1 to inhibit pyruvate dehydrogenase complex activity and suppress the formation of acetyl-coenzyme A from pyruvate, and consequently inhibit oxidative phosphorylation and promote glycolysis. May play a role in sperm motility. The polypeptide is Phosphoglycerate kinase 1 (PGK1) (Equus caballus (Horse)).